The following is a 431-amino-acid chain: L-cysteine:1D-myo-inositol 2-amino-2-deoxy-alpha-D-glucopyranoside ligase (431 aa).

Residue Cys-44 coordinates Zn(2+). Residues 44 to 47 (CGIT), Thr-59, and 82 to 84 (NVT) each bind L-cysteinyl-5'-AMP. The 'HIGH' region motif lies at 46 to 56 (ITPYDATHLGH). The short motif at 187–192 (ERGGDP) is the 'ERGGDP' region element. Trp-227 contributes to the L-cysteinyl-5'-AMP binding site. Residue Cys-231 participates in Zn(2+) binding. L-cysteinyl-5'-AMP is bound at residue 249–251 (GND). His-256 serves as a coordination point for Zn(2+). Ile-283 lines the L-cysteinyl-5'-AMP pocket. Residues 289 to 293 (KMSKS) carry the 'KMSKS' region motif.

Belongs to the class-I aminoacyl-tRNA synthetase family. MshC subfamily. Monomer. The cofactor is Zn(2+).

It catalyses the reaction 1D-myo-inositol 2-amino-2-deoxy-alpha-D-glucopyranoside + L-cysteine + ATP = 1D-myo-inositol 2-(L-cysteinylamino)-2-deoxy-alpha-D-glucopyranoside + AMP + diphosphate + H(+). Catalyzes the ATP-dependent condensation of GlcN-Ins and L-cysteine to form L-Cys-GlcN-Ins. This Stackebrandtia nassauensis (strain DSM 44728 / CIP 108903 / NRRL B-16338 / NBRC 102104 / LLR-40K-21) protein is L-cysteine:1D-myo-inositol 2-amino-2-deoxy-alpha-D-glucopyranoside ligase.